Consider the following 152-residue polypeptide: Psoriasis susceptibility 1 candidate gene 1 protein homolog (152 aa).

Polar residues predominate over residues 1–31 (MTCTDQKSHSQRALGTQTPALQGPQLLNTDP). Disordered stretches follow at residues 1–39 (MTCT…TRPP) and 132–152 (APTL…SSLI).

The protein is Psoriasis susceptibility 1 candidate gene 1 protein homolog (PSORS1C1) of Pan troglodytes (Chimpanzee).